The chain runs to 616 residues: Dihydroxy-acid dehydratase (616 aa).

D81 provides a ligand contact to Mg(2+). Residue C122 participates in [2Fe-2S] cluster binding. Mg(2+) contacts are provided by D123 and K124. K124 carries the N6-carboxylysine modification. Position 195 (C195) interacts with [2Fe-2S] cluster. Position 491 (E491) interacts with Mg(2+). S517 serves as the catalytic Proton acceptor.

Belongs to the IlvD/Edd family. As to quaternary structure, homodimer. The cofactor is [2Fe-2S] cluster. It depends on Mg(2+) as a cofactor.

The enzyme catalyses (2R)-2,3-dihydroxy-3-methylbutanoate = 3-methyl-2-oxobutanoate + H2O. It carries out the reaction (2R,3R)-2,3-dihydroxy-3-methylpentanoate = (S)-3-methyl-2-oxopentanoate + H2O. It functions in the pathway amino-acid biosynthesis; L-isoleucine biosynthesis; L-isoleucine from 2-oxobutanoate: step 3/4. Its pathway is amino-acid biosynthesis; L-valine biosynthesis; L-valine from pyruvate: step 3/4. Functionally, functions in the biosynthesis of branched-chain amino acids. Catalyzes the dehydration of (2R,3R)-2,3-dihydroxy-3-methylpentanoate (2,3-dihydroxy-3-methylvalerate) into 2-oxo-3-methylpentanoate (2-oxo-3-methylvalerate) and of (2R)-2,3-dihydroxy-3-methylbutanoate (2,3-dihydroxyisovalerate) into 2-oxo-3-methylbutanoate (2-oxoisovalerate), the penultimate precursor to L-isoleucine and L-valine, respectively. This chain is Dihydroxy-acid dehydratase, found in Yersinia pseudotuberculosis serotype O:1b (strain IP 31758).